A 450-amino-acid chain; its full sequence is Interferon regulatory factor 4 (450 aa).

Residues 21 to 129 (NGKLRQWLID…DPYKVYRIVP (109 aa)) constitute a DNA-binding region (IRF tryptophan pentad repeat). Phosphoserine; by ROCK2 occurs at positions 446 and 447.

It belongs to the IRF family. Interacts with SPIB and DEF6. Interacts with the BATF-JUNB heterodimer. Interacts with BATF (via bZIP domain); the interaction is direct. Directly interacts with NLRP3 in the nucleus of Th2 cells; this interaction enhances IRF4 ability to bind to the IL4 promoter and is required for optimal IRF4-dependent IL4 transcription. Interacts with SPI1. Phosphorylation by ROCK2 regulates IL-17 and IL-21 production. In terms of tissue distribution, lymphoid cells.

The protein localises to the nucleus. Its subcellular location is the cytoplasm. Its function is as follows. Transcriptional activator. Binds to the interferon-stimulated response element (ISRE) of the MHC class I promoter. Binds the immunoglobulin lambda light chain enhancer, together with PU.1. Probably plays a role in ISRE-targeted signal transduction mechanisms specific to lymphoid cells. Involved in CD8(+) dendritic cell differentiation by forming a complex with the BATF-JUNB heterodimer in immune cells, leading to recognition of AICE sequence (5'-TGAnTCA/GAAA-3'), an immune-specific regulatory element, followed by cooperative binding of BATF and IRF4 and activation of genes. This chain is Interferon regulatory factor 4, found in Mus musculus (Mouse).